Consider the following 473-residue polypeptide: H(+)/Cl(-) exchange transporter ClcA (473 aa).

Over 1–32 the chain is Cytoplasmic; that stretch reads MKTDTPSLETPQAARLRRRQLIRQLLERDKTP. A helical transmembrane segment spans residues 33 to 69; it reads LAILFMAAVVGTLVGLAAVAFDKGVAWLQNQRMGALV. Topologically, residues 70–76 are periplasmic; the sequence is HTADNYP. Residues 77 to 100 traverse the membrane as a helical segment; that stretch reads LLLTVAFLCSAVLAMFGYFLVRKY. Positions 106-110 match the Selectivity filter part_1 motif; that stretch reads GSGIP. Chloride is bound at residue Ser-107. An intramembrane region (helical) is located at residues 109-116; the sequence is IPEIEGAL. The Cytoplasmic portion of the chain corresponds to 117–123; the sequence is EDQRPVR. Helical transmembrane passes span 124 to 141 and 148 to 166; these read WWRV…TLGG and EGPT…LDVF. The Selectivity filter part_2 motif lies at 146–150; it reads GREGP. The Cytoplasmic segment spans residues 167 to 176; the sequence is RLKGDEARHT. 2 intramembrane regions (helical) span residues 177 to 189 and 193 to 201; these read LLAT…LAAA and PLAGILFII. Over 202 to 214 the chain is Cytoplasmic; the sequence is EEMRPQFRYTLIS. Residues 215–232 traverse the membrane as a helical segment; the sequence is IKAVFIGVIMSTIMYRIF. Residues 233–252 lie on the Periplasmic side of the membrane; it reads NHEVALIDVGKLSDAPLNTL. The chain crosses the membrane as a helical span at residues 253–281; sequence WLYLILGIIFGIFGPIFNKWVLGMQDLLH. Over 282–287 the chain is Cytoplasmic; the sequence is RVHGGN. The chain crosses the membrane as a helical span at residues 288-309; that stretch reads ITKWVLMGGAIGGLCGLLGFVA. The Periplasmic segment spans residues 310 to 329; sequence PATSGGGFNLIPIATAGNFS. 2 consecutive transmembrane segments (helical) span residues 330–349 and 355–376; these read MGML…LCFS and GIFA…MVAV. A Selectivity filter part_3 motif is present at residues 355–359; that stretch reads GIFAP. Chloride is bound by residues Ile-356 and Phe-357. The Periplasmic segment spans residues 377 to 386; sequence ELFPQYHLEA. An intramembrane region (helical) is located at residues 387–401; that stretch reads GTFAIAGMGALLAAS. Residues 402-404 constitute an intramembrane region (note=Loop between two helices); that stretch reads IRA. The segment at residues 405-416 is an intramembrane region (helical); that stretch reads PLTGIILVLEMT. Residues 417–421 constitute an intramembrane region (note=Loop between two helices); sequence DNYQL. A helical transmembrane segment spans residues 422-438; it reads ILPMIITGLGATLLAQF. Residues 439-473 are Cytoplasmic-facing; sequence TGGKPLYSAILARTLAKQEAEQLARSKAASARENT. Chloride is bound at residue Tyr-445.

Belongs to the chloride channel (TC 2.A.49) family. ClcA subfamily. In terms of assembly, homodimer.

The protein localises to the cell inner membrane. The enzyme catalyses 2 chloride(in) + H(+)(out) = 2 chloride(out) + H(+)(in). Its function is as follows. Proton-coupled chloride transporter. Functions as antiport system and exchanges two chloride ions for 1 proton. Probably acts as an electrical shunt for an outwardly-directed proton pump that is linked to amino acid decarboxylation, as part of the extreme acid resistance (XAR) response. The chain is H(+)/Cl(-) exchange transporter ClcA from Escherichia coli O45:K1 (strain S88 / ExPEC).